The primary structure comprises 608 residues: 1-deoxy-D-xylulose-5-phosphate synthase (608 aa).

Residues histidine 80 and 121–123 contribute to the thiamine diphosphate site; that span reads GHS. Residue aspartate 152 coordinates Mg(2+). Residues 153 to 154, asparagine 181, tyrosine 282, and glutamate 357 each bind thiamine diphosphate; that span reads GA. Asparagine 181 provides a ligand contact to Mg(2+).

The protein belongs to the transketolase family. DXPS subfamily. In terms of assembly, homodimer. It depends on Mg(2+) as a cofactor. The cofactor is thiamine diphosphate.

The catalysed reaction is D-glyceraldehyde 3-phosphate + pyruvate + H(+) = 1-deoxy-D-xylulose 5-phosphate + CO2. Its pathway is metabolic intermediate biosynthesis; 1-deoxy-D-xylulose 5-phosphate biosynthesis; 1-deoxy-D-xylulose 5-phosphate from D-glyceraldehyde 3-phosphate and pyruvate: step 1/1. Catalyzes the acyloin condensation reaction between C atoms 2 and 3 of pyruvate and glyceraldehyde 3-phosphate to yield 1-deoxy-D-xylulose-5-phosphate (DXP). The chain is 1-deoxy-D-xylulose-5-phosphate synthase from Buchnera aphidicola subsp. Acyrthosiphon pisum (strain 5A).